The following is a 457-amino-acid chain: Subtilisin-like serine protease Pen c 2 (457 aa).

The N-terminal stretch at 1-16 (MKGFLGLALLPLLTAA) is a signal peptide. Positions 17-136 (SPVSVESIHN…IEKDSEVHHF (120 aa)) are cleaved as a propeptide — removed in mature form. The Inhibitor I9 domain maps to 43-134 (SYIVVFKKHV…DYIEKDSEVH (92 aa)). Residues 146–457 (PWGLARISHR…YTDIVAQGGY (312 aa)) form the Peptidase S8 domain. Catalysis depends on charge relay system residues Asp182 and His214. N-linked (GlcNAc...) asparagine glycans are attached at residues Asn244 and Asn284. The Charge relay system role is filled by Ser380. A glycan (N-linked (GlcNAc...) asparagine) is linked at Asn447.

The protein belongs to the peptidase S8 family.

Its function is as follows. Serine protease. In Penicillium citrinum, this protein is Subtilisin-like serine protease Pen c 2.